A 448-amino-acid polypeptide reads, in one-letter code: Tubulin beta chain (448 aa).

Residues Q11, E69, S138, G142, T143, G144, N204, and N226 each coordinate GTP. E69 is a Mg(2+) binding site. The segment at 429 to 448 is disordered; the sequence is GIDEGDEDYEIEEEKEPLEY.

The protein belongs to the tubulin family. In terms of assembly, dimer of alpha and beta chains. A typical microtubule is a hollow water-filled tube with an outer diameter of 25 nm and an inner diameter of 15 nM. Alpha-beta heterodimers associate head-to-tail to form protofilaments running lengthwise along the microtubule wall with the beta-tubulin subunit facing the microtubule plus end conferring a structural polarity. Microtubules usually have 13 protofilaments but different protofilament numbers can be found in some organisms and specialized cells. Mg(2+) is required as a cofactor.

It localises to the cytoplasm. The protein resides in the cytoskeleton. Its function is as follows. Tubulin is the major constituent of microtubules, a cylinder consisting of laterally associated linear protofilaments composed of alpha- and beta-tubulin heterodimers. Microtubules grow by the addition of GTP-tubulin dimers to the microtubule end, where a stabilizing cap forms. Below the cap, tubulin dimers are in GDP-bound state, owing to GTPase activity of alpha-tubulin. This is Tubulin beta chain (nda3) from Schizosaccharomyces pombe (strain 972 / ATCC 24843) (Fission yeast).